The chain runs to 145 residues: MRTTYMAKPLEVERKWYIVDAEGQTLGRLASEVASILRGKLKPEFTPHVDAGDFVIVINADKVKLTGNKLNDKIYYTHSLYPGGLKKTTAGAMLNKRPDRMFELAVKGMLPKNSLGRQMFTKLKVYAGTEHPHAAQKPEVWQIRG.

It belongs to the universal ribosomal protein uL13 family. As to quaternary structure, part of the 50S ribosomal subunit.

Its function is as follows. This protein is one of the early assembly proteins of the 50S ribosomal subunit, although it is not seen to bind rRNA by itself. It is important during the early stages of 50S assembly. The sequence is that of Large ribosomal subunit protein uL13 from Brevibacillus brevis (strain 47 / JCM 6285 / NBRC 100599).